Reading from the N-terminus, the 307-residue chain is Dof zinc finger protein DOF5.4 (307 aa).

The Dof-type zinc finger occupies 51-105; the sequence is LKCPRCNSLNTKFCYYNNYNLSQPRHFCKNCRRYWTKGGVLRNVPVGGGCRKAKR. 4 residues coordinate Zn(2+): Cys53, Cys56, Cys78, and Cys81. Positions 96–147 are disordered; that stretch reads VGGGCRKAKRSKTKQVPSSSSADKPTTTQDDHHVEEKSSTGSHSSSESSSLT. The span at 109–123 shows a compositional bias: polar residues; that stretch reads KQVPSSSSADKPTTT. Residues 124 to 133 show a composition bias toward basic and acidic residues; the sequence is QDDHHVEEKS. Low complexity predominate over residues 134–147; sequence STGSHSSSESSSLT.

It localises to the nucleus. Functionally, transcription factor that binds specifically to a 5'-AA[AG]G-3' consensus core sequence. Enhances the DNA binding of OBF transcription factors to OCS elements. The polypeptide is Dof zinc finger protein DOF5.4 (DOF5.4) (Arabidopsis thaliana (Mouse-ear cress)).